Here is a 130-residue protein sequence, read N- to C-terminus: Small ribosomal subunit protein uS8 (130 aa).

Belongs to the universal ribosomal protein uS8 family. In terms of assembly, part of the 30S ribosomal subunit. Contacts proteins S5 and S12.

Functionally, one of the primary rRNA binding proteins, it binds directly to 16S rRNA central domain where it helps coordinate assembly of the platform of the 30S subunit. In Shewanella loihica (strain ATCC BAA-1088 / PV-4), this protein is Small ribosomal subunit protein uS8.